A 118-amino-acid polypeptide reads, in one-letter code: MNKIDAIELEQMKKNIPPFKPGDTLKVHVKIVEGDKSRIQAFQGVCISRQNGGIRESFTVRKISNNIGVERVFPLHSPTVDAIEVITRGHVRRAKLYYLRKLRGKAARIREKKYVAAQ.

The protein belongs to the bacterial ribosomal protein bL19 family.

In terms of biological role, this protein is located at the 30S-50S ribosomal subunit interface and may play a role in the structure and function of the aminoacyl-tRNA binding site. The polypeptide is Large ribosomal subunit protein bL19 (Geobacter sulfurreducens (strain ATCC 51573 / DSM 12127 / PCA)).